A 263-amino-acid polypeptide reads, in one-letter code: Polyglutamine-binding protein 1 (263 aa).

Residues 46-80 (EGLPPSWYKVFDPSCGLPYYWNVETDLVSWLSPHD) form the WW domain. Positions 94–263 (NSNADAEDKS…AEASRSKQQD (170 aa)) are disordered. Positions 99–173 (AEDKSERNLE…DKADREDGKD (75 aa)) are enriched in basic and acidic residues. The stretch at 104–110 (ERNLEKV) is one 1-1; approximate repeat. The tract at residues 104–138 (ERNLEKVDRNHEKSDRSHEKPDRSHEKADRNHEKS) is 5 X 7 AA approximate tandem repeats of D-R-[NS]-H-E-K-S. One copy of the 1-2 repeat lies at 111 to 117 (DRNHEKS). A 1-3; approximate repeat occupies 118–124 (DRSHEKP). A 1-4; approximate repeat occupies 125-131 (DRSHEKA). 10 consecutive repeat copies span residues 132–138 (DRNHEKS), 139–140 (DR), 141–142 (ER), 143–144 (ER), 150–151 (DR), 152–153 (ER), 154–155 (DR), 156–157 (DR), 158–159 (ER), and 160–161 (ER). The tract at residues 139-144 (DRERER) is 3 X 2 AA tandem repeats of [DE]-R. The segment at 150–161 (DRERDRDRERER) is 6 X 2 AA tandem repeats of [DE]-R. An important for interaction with TXNL4A region spans residues 243–253 (YPSPGAVLRAN). Ser245 bears the Phosphoserine mark.

In terms of assembly, interacts with POU3F2/Brn-2, ATXN1, TXNL4A, HTT and AR. Interaction with ATXN1 correlates positively with the length of the polyglutamine tract. Interacts with RNA polymerase II large subunit in a phosphorylation-dependent manner. Forms a ternary complex with ATXN1 mutant and phosphorylated RNA polymerase II. Interacts (via C-terminus) with TXNL4A and CD2BP2. Interacts (via WW domain) with ATN1 and SF3B1, and may interact with additional splice factors. Interacts (via WW domain) with WBP11; Leading to reduce interaction between PQBP1 and TXNL4A. Interacts with CAPRIN1. Interacts with DDX1. Interacts with SFPQ. Interacts with KHSRP.

Its subcellular location is the nucleus. The protein localises to the nucleus speckle. The protein resides in the cytoplasmic granule. Intrinsically disordered protein that acts as a scaffold, and which is involved in different processes, such as pre-mRNA splicing, transcription regulation, innate immunity and neuron development. Interacts with splicing-related factors via the intrinsically disordered region and regulates alternative splicing of target pre-mRNA species. May suppress the ability of POU3F2 to transactivate the DRD1 gene in a POU3F2 dependent manner. Can activate transcription directly or via association with the transcription machinery. May be involved in ATXN1 mutant-induced cell death. The interaction with ATXN1 mutant reduces levels of phosphorylated RNA polymerase II large subunit. Involved in the assembly of cytoplasmic stress granule, possibly by participating in the transport of neuronal RNA granules. Also acts as an innate immune sensor of infection by retroviruses, by detecting the presence of reverse-transcribed DNA in the cytosol. Directly binds retroviral reverse-transcribed DNA in the cytosol and interacts with CGAS, leading to activate the cGAS-STING signaling pathway, triggering type-I interferon production. The sequence is that of Polyglutamine-binding protein 1 (Pqbp1) from Rattus norvegicus (Rat).